A 414-amino-acid chain; its full sequence is Glucose-1-phosphate adenylyltransferase (414 aa).

Residues Gly164, 184-185 (EK), and Ser204 contribute to the alpha-D-glucose 1-phosphate site.

The protein belongs to the bacterial/plant glucose-1-phosphate adenylyltransferase family. Homotetramer.

It catalyses the reaction alpha-D-glucose 1-phosphate + ATP + H(+) = ADP-alpha-D-glucose + diphosphate. It participates in glycan biosynthesis; glycogen biosynthesis. Functionally, involved in the biosynthesis of ADP-glucose, a building block required for the elongation reactions to produce glycogen. Catalyzes the reaction between ATP and alpha-D-glucose 1-phosphate (G1P) to produce pyrophosphate and ADP-Glc. This Acidothermus cellulolyticus (strain ATCC 43068 / DSM 8971 / 11B) protein is Glucose-1-phosphate adenylyltransferase.